Consider the following 73-residue polypeptide: Gastricsin (73 aa).

The propeptide at 1–43 (SVIKVPLKKLKSIRQAMKEKGLLEEFLKTHKYDPAQRYRIGDI) is activation peptide. The Peptidase A1 domain occupies 57 to 73 (YFGEISIGTPPQNFLVL).

This sequence belongs to the peptidase A1 family.

Its subcellular location is the secreted. It catalyses the reaction More restricted specificity than pepsin A, but shows preferential cleavage at Tyr-|-Xaa bonds. High activity on hemoglobin.. Its function is as follows. Hydrolyzes a variety of proteins. In Sus scrofa (Pig), this protein is Gastricsin (PGC).